The sequence spans 182 residues: Ribosome-recycling factor (182 aa).

This sequence belongs to the RRF family.

It is found in the cytoplasm. Functionally, responsible for the release of ribosomes from messenger RNA at the termination of protein biosynthesis. May increase the efficiency of translation by recycling ribosomes from one round of translation to another. The chain is Ribosome-recycling factor from Prochlorococcus marinus (strain MIT 9313).